Here is a 717-residue protein sequence, read N- to C-terminus: Ubiquitin carboxyl-terminal hydrolase 11 (717 aa).

The interval 231 to 268 is disordered; it reads ATAPPVHSLEVSSQIRDSSQDSSSSLSKVEKPKEEEGK. A compositionally biased stretch (low complexity) spans 242–257; sequence SSQIRDSSQDSSSSLS. Positions 258–268 are enriched in basic and acidic residues; that stretch reads KVEKPKEEEGK. Residues 298 to 707 enclose the USP domain; that stretch reads TGLQNPCNTC…EVYVLFYERM (410 aa). Cys307 acts as the Nucleophile in catalysis. The tract at residues 531 to 577 is disordered; it reads KKEEITSQKKKSTIFGFHSRSRSKSPHHHHHHHHSSDDSTKNAKKRN. Positions 549–564 are enriched in basic residues; the sequence is SRSRSKSPHHHHHHHH. The active-site Proton acceptor is His649.

It belongs to the peptidase C19 family.

It carries out the reaction Thiol-dependent hydrolysis of ester, thioester, amide, peptide and isopeptide bonds formed by the C-terminal Gly of ubiquitin (a 76-residue protein attached to proteins as an intracellular targeting signal).. The polypeptide is Ubiquitin carboxyl-terminal hydrolase 11 (UBP11) (Saccharomyces cerevisiae (strain ATCC 204508 / S288c) (Baker's yeast)).